The sequence spans 210 residues: Oxygen-insensitive NADPH nitroreductase (210 aa).

An NADP(+)-binding site is contributed by G150 to G155.

Belongs to the nitroreductase family.

In terms of biological role, reduction of a variety of nitroaromatic compounds using NADPH as source of reducing equivalents; two electrons are transferred. This is Oxygen-insensitive NADPH nitroreductase (rdxA) from Helicobacter pylori (strain J99 / ATCC 700824) (Campylobacter pylori J99).